The primary structure comprises 443 residues: MECLRSLPCLLPRAMRLPRRTLCALALDLTSVAPPVAASGRRANLIGRSRAAQLCEPGRLRVAGEVHRFRTSDVSQATLASVAPVFTVTKFDKQGNVTSFERKKTELYQELGLQARDLRFQHVMSITVRNNRIIMRMEYLKAVITPECLLILDYRNLNLEQWLFRELPSQLSGEGQLVTYPLPFEFRAIEALLQYWINTLQGKLSVLQPLILETLDALVDPKHSSVDKSKLHILLQNGKSLSELETDIKIFKESILEILDEEELLEELCVSKWSDPQVFEKSSAGIDHAEEMELLLENYYRLADDLSNAARELRVLIDDSQSIIFINLGSHRNVMMRLNLQLTMGTFSLSLFGLMGVAFGMNLESSLEEDHRIFWLITGIMFMGSGLIWRRLLSFLGRQLEAPLPPMMASLPKKTLLADRSMELKNSLRLDGLGSGRSILTNR.

A mitochondrion-targeting transit peptide spans 1 to 49; the sequence is MECLRSLPCLLPRAMRLPRRTLCALALDLTSVAPPVAASGRRANLIGRS. Over 50–339 the chain is Mitochondrial matrix; the sequence is RAAQLCEPGR…SHRNVMMRLN (290 aa). Residues Glu-243, Thr-246, Asp-247, Glu-312, and Gly-329 each coordinate Mg(2+). A helical membrane pass occupies residues 340-359; that stretch reads LQLTMGTFSLSLFGLMGVAF. Positions 360 and 362 each coordinate Mg(2+). Positions 360–362 match the GMN motif motif; the sequence is GMN. Topologically, residues 360–370 are mitochondrial intermembrane; the sequence is GMNLESSLEED. The helical transmembrane segment at 371 to 401 threads the bilayer; the sequence is HRIFWLITGIMFMGSGLIWRRLLSFLGRQLE. The Mitochondrial matrix portion of the chain corresponds to 402–443; that stretch reads APLPPMMASLPKKTLLADRSMELKNSLRLDGLGSGRSILTNR.

Belongs to the CorA metal ion transporter (MIT) (TC 1.A.35) family. In terms of assembly, homopentamer.

The protein resides in the mitochondrion inner membrane. Its activity is regulated as follows. May be regulated by calcium ions. In terms of biological role, magnesium transporter that mediates the influx of magnesium into the mitochondrial matrix and regulates magnesium metabolism. Also permeable to calcium, sodium and potassium ions. Required for normal expression of the mitochondrial respiratory complex I subunits. May play a role in maintaining the inner mitochondrial membrane potential. This is Magnesium transporter MRS2 homolog, mitochondrial (MRS2) from Pongo abelii (Sumatran orangutan).